The sequence spans 221 residues: Putative hemin import ATP-binding protein HrtA (221 aa).

Positions leucine 3–aspartate 221 constitute an ABC transporter domain. ATP is bound at residue glycine 39–threonine 46.

This sequence belongs to the ABC transporter superfamily. HrtA family. In terms of assembly, the complex is composed of two ATP-binding proteins (HrtA), two transmembrane proteins (HrtB) and a solute-binding protein.

The protein localises to the cell membrane. In terms of biological role, part of the ABC transporter complex hrt involved in hemin import. Responsible for energy coupling to the transport system. The protein is Putative hemin import ATP-binding protein HrtA (hrtA) of Staphylococcus aureus (strain Mu50 / ATCC 700699).